Here is a 491-residue protein sequence, read N- to C-terminus: NADH-quinone oxidoreductase subunit N (491 aa).

Helical transmembrane passes span 11-31 (ATAE…TTFA), 38-58 (LAYG…YNTA), 74-94 (LLGD…LLYG), 106-126 (PEYY…VTSN), 128-148 (LLSM…LVAF), 163-183 (FVLG…LYGA), 206-226 (LLFG…VVPF), 243-263 (LIIA…LLVW), 272-292 (WQTM…LAAI), 301-321 (LAYS…SGVV), 336-356 (MFYA…IILL), 379-399 (FAAM…FIGF), 410-430 (VAAG…IGAF), and 465-485 (LAIA…TFVL).

The protein belongs to the complex I subunit 2 family. As to quaternary structure, NDH-1 is composed of 14 different subunits. Subunits NuoA, H, J, K, L, M, N constitute the membrane sector of the complex.

The protein localises to the cell inner membrane. It catalyses the reaction a quinone + NADH + 5 H(+)(in) = a quinol + NAD(+) + 4 H(+)(out). Its function is as follows. NDH-1 shuttles electrons from NADH, via FMN and iron-sulfur (Fe-S) centers, to quinones in the respiratory chain. The immediate electron acceptor for the enzyme in this species is believed to be ubiquinone. Couples the redox reaction to proton translocation (for every two electrons transferred, four hydrogen ions are translocated across the cytoplasmic membrane), and thus conserves the redox energy in a proton gradient. The polypeptide is NADH-quinone oxidoreductase subunit N (Azoarcus sp. (strain BH72)).